Here is a 356-residue protein sequence, read N- to C-terminus: S-adenosylmethionine:tRNA ribosyltransferase-isomerase (356 aa).

Belongs to the QueA family. In terms of assembly, monomer.

The protein localises to the cytoplasm. The enzyme catalyses 7-aminomethyl-7-carbaguanosine(34) in tRNA + S-adenosyl-L-methionine = epoxyqueuosine(34) in tRNA + adenine + L-methionine + 2 H(+). Its pathway is tRNA modification; tRNA-queuosine biosynthesis. Transfers and isomerizes the ribose moiety from AdoMet to the 7-aminomethyl group of 7-deazaguanine (preQ1-tRNA) to give epoxyqueuosine (oQ-tRNA). This Histophilus somni (strain 2336) (Haemophilus somnus) protein is S-adenosylmethionine:tRNA ribosyltransferase-isomerase.